Consider the following 213-residue polypeptide: Orotate phosphoribosyltransferase (213 aa).

Lysine 26 contacts 5-phospho-alpha-D-ribose 1-diphosphate. Residue 34–35 (FF) participates in orotate binding. 5-phospho-alpha-D-ribose 1-diphosphate contacts are provided by residues 72–73 (YK), arginine 99, lysine 100, lysine 103, histidine 105, and 124–132 (DDVITAGTA). Orotate contacts are provided by threonine 128 and arginine 156.

This sequence belongs to the purine/pyrimidine phosphoribosyltransferase family. PyrE subfamily. Homodimer. Mg(2+) is required as a cofactor.

It catalyses the reaction orotidine 5'-phosphate + diphosphate = orotate + 5-phospho-alpha-D-ribose 1-diphosphate. It participates in pyrimidine metabolism; UMP biosynthesis via de novo pathway; UMP from orotate: step 1/2. Its function is as follows. Catalyzes the transfer of a ribosyl phosphate group from 5-phosphoribose 1-diphosphate to orotate, leading to the formation of orotidine monophosphate (OMP). This Klebsiella pneumoniae (strain 342) protein is Orotate phosphoribosyltransferase.